We begin with the raw amino-acid sequence, 276 residues long: Dermonecrotic toxin LlSicTox-alphaIV2iii (276 aa).

The active site involves histidine 5. Glutamate 25 and aspartate 27 together coordinate Mg(2+). Catalysis depends on histidine 41, which acts as the Nucleophile. 2 disulfides stabilise this stretch: cysteine 45–cysteine 51 and cysteine 47–cysteine 193. Residue aspartate 85 coordinates Mg(2+).

This sequence belongs to the arthropod phospholipase D family. Class II subfamily. The cofactor is Mg(2+). In terms of tissue distribution, expressed by the venom gland.

It localises to the secreted. The enzyme catalyses an N-(acyl)-sphingosylphosphocholine = an N-(acyl)-sphingosyl-1,3-cyclic phosphate + choline. The catalysed reaction is an N-(acyl)-sphingosylphosphoethanolamine = an N-(acyl)-sphingosyl-1,3-cyclic phosphate + ethanolamine. It carries out the reaction a 1-acyl-sn-glycero-3-phosphocholine = a 1-acyl-sn-glycero-2,3-cyclic phosphate + choline. It catalyses the reaction a 1-acyl-sn-glycero-3-phosphoethanolamine = a 1-acyl-sn-glycero-2,3-cyclic phosphate + ethanolamine. Dermonecrotic toxins cleave the phosphodiester linkage between the phosphate and headgroup of certain phospholipids (sphingolipid and lysolipid substrates), forming an alcohol (often choline) and a cyclic phosphate. This toxin acts on sphingomyelin (SM). It may also act on ceramide phosphoethanolamine (CPE), lysophosphatidylcholine (LPC) and lysophosphatidylethanolamine (LPE), but not on lysophosphatidylserine (LPS), and lysophosphatidylglycerol (LPG). It acts by transphosphatidylation, releasing exclusively cyclic phosphate products as second products. Induces dermonecrosis, hemolysis, increased vascular permeability, edema, inflammatory response, and platelet aggregation. The sequence is that of Dermonecrotic toxin LlSicTox-alphaIV2iii from Loxosceles laeta (South American recluse spider).